The chain runs to 488 residues: HSPB1-associated protein 1 (488 aa).

The interaction with HSPB1 stretch occupies residues 88–208; the sequence is ETTCNYVEAT…EDTPFLYPTR (121 aa). In terms of domain architecture, JmjC spans 124 to 288; that stretch reads WAYADYKYFV…HLARVEEAIT (165 aa). Positions 369–379 are enriched in polar residues; it reads QTGSQNLTTGT. The interval 369 to 415 is disordered; sequence QTGSQNLTTGTDKPEAASPFGPDLVPVAQRSEEPPSERGGIFGSDGK.

In terms of assembly, interacts with CRYAB and HSPB1. Widely expressed.

It localises to the cytoplasm. May play a role in cellular stress response. In Homo sapiens (Human), this protein is HSPB1-associated protein 1 (HSPBAP1).